We begin with the raw amino-acid sequence, 274 residues long: Diaminopimelate epimerase (274 aa).

Residues N11, Q44, and N64 each contribute to the substrate site. The active-site Proton donor is C73. Substrate contacts are provided by residues 74–75 (GN), N157, N190, and 208–209 (ER). C217 (proton acceptor) is an active-site residue. Residue 218 to 219 (GS) coordinates substrate.

It belongs to the diaminopimelate epimerase family. Homodimer.

It localises to the cytoplasm. The catalysed reaction is (2S,6S)-2,6-diaminopimelate = meso-2,6-diaminopimelate. It participates in amino-acid biosynthesis; L-lysine biosynthesis via DAP pathway; DL-2,6-diaminopimelate from LL-2,6-diaminopimelate: step 1/1. Its function is as follows. Catalyzes the stereoinversion of LL-2,6-diaminopimelate (L,L-DAP) to meso-diaminopimelate (meso-DAP), a precursor of L-lysine and an essential component of the bacterial peptidoglycan. This is Diaminopimelate epimerase from Yersinia enterocolitica serotype O:8 / biotype 1B (strain NCTC 13174 / 8081).